Reading from the N-terminus, the 66-residue chain is UPF0337 protein M6_Spy1542 (66 aa).

Residues Met1–Val10 show a composition bias toward basic and acidic residues. The disordered stretch occupies residues Met1 to Gly22.

The protein belongs to the UPF0337 (CsbD) family.

The chain is UPF0337 protein M6_Spy1542 from Streptococcus pyogenes serotype M6 (strain ATCC BAA-946 / MGAS10394).